The sequence spans 181 residues: UPF0215 protein AF_1433 (181 aa).

Belongs to the UPF0215 family.

The sequence is that of UPF0215 protein AF_1433 from Archaeoglobus fulgidus (strain ATCC 49558 / DSM 4304 / JCM 9628 / NBRC 100126 / VC-16).